The chain runs to 400 residues: Phosphoglycerate kinase (400 aa).

Substrate is bound by residues 24–26 (DFN), R40, 63–66 (HFGR), R121, and R154. ATP is bound by residues K205, G296, E327, and 356-359 (GGDS).

This sequence belongs to the phosphoglycerate kinase family. As to quaternary structure, monomer.

It is found in the cytoplasm. It carries out the reaction (2R)-3-phosphoglycerate + ATP = (2R)-3-phospho-glyceroyl phosphate + ADP. It participates in carbohydrate degradation; glycolysis; pyruvate from D-glyceraldehyde 3-phosphate: step 2/5. The sequence is that of Phosphoglycerate kinase from Nostoc punctiforme (strain ATCC 29133 / PCC 73102).